A 285-amino-acid polypeptide reads, in one-letter code: Small ribosomal subunit biogenesis GTPase RsgA (285 aa).

Positions 56-217 constitute a CP-type G domain; that stretch reads DNLLIRPIVA…IIDTPGFSSI (162 aa). Residues 105–108 and 159–167 contribute to the GTP site; these read NKID and GPSGVGKSS. Residues Cys-241, Cys-246, His-248, and Cys-254 each contribute to the Zn(2+) site.

Belongs to the TRAFAC class YlqF/YawG GTPase family. RsgA subfamily. In terms of assembly, monomer. Associates with 30S ribosomal subunit, binds 16S rRNA. It depends on Zn(2+) as a cofactor.

The protein localises to the cytoplasm. In terms of biological role, one of several proteins that assist in the late maturation steps of the functional core of the 30S ribosomal subunit. Helps release RbfA from mature subunits. May play a role in the assembly of ribosomal proteins into the subunit. Circularly permuted GTPase that catalyzes slow GTP hydrolysis, GTPase activity is stimulated by the 30S ribosomal subunit. This Fusobacterium nucleatum subsp. nucleatum (strain ATCC 25586 / DSM 15643 / BCRC 10681 / CIP 101130 / JCM 8532 / KCTC 2640 / LMG 13131 / VPI 4355) protein is Small ribosomal subunit biogenesis GTPase RsgA.